The primary structure comprises 111 residues: ATP synthase subunit c (111 aa).

2 helical membrane passes run 38–58 (GLGV…GSGL) and 89–109 (AGIA…LIFV).

It belongs to the ATPase C chain family. In terms of assembly, F-type ATPases have 2 components, F(1) - the catalytic core - and F(0) - the membrane proton channel. F(1) has five subunits: alpha(3), beta(3), gamma(1), delta(1), epsilon(1). F(0) has three main subunits: a(1), b(2) and c(10-14). The alpha and beta chains form an alternating ring which encloses part of the gamma chain. F(1) is attached to F(0) by a central stalk formed by the gamma and epsilon chains, while a peripheral stalk is formed by the delta and b chains.

Its subcellular location is the cell membrane. F(1)F(0) ATP synthase produces ATP from ADP in the presence of a proton or sodium gradient. F-type ATPases consist of two structural domains, F(1) containing the extramembraneous catalytic core and F(0) containing the membrane proton channel, linked together by a central stalk and a peripheral stalk. During catalysis, ATP synthesis in the catalytic domain of F(1) is coupled via a rotary mechanism of the central stalk subunits to proton translocation. Its function is as follows. Key component of the F(0) channel; it plays a direct role in translocation across the membrane. A homomeric c-ring of between 10-14 subunits forms the central stalk rotor element with the F(1) delta and epsilon subunits. The polypeptide is ATP synthase subunit c (Mycoplasmopsis synoviae (strain 53) (Mycoplasma synoviae)).